Consider the following 472-residue polypeptide: L-fuculokinase (472 aa).

The protein belongs to the FGGY kinase family. The cofactor is a divalent metal cation.

It carries out the reaction L-fuculose + ATP = L-fuculose 1-phosphate + ADP + H(+). It participates in carbohydrate degradation; L-fucose degradation; L-lactaldehyde and glycerone phosphate from L-fucose: step 2/3. Its function is as follows. Catalyzes the phosphorylation of L-fuculose. The chain is L-fuculokinase from Salmonella typhi.